Here is a 192-residue protein sequence, read N- to C-terminus: Pupal cuticle protein (192 aa).

The N-terminal stretch at 1–15 (MHLLMSLFGVLAVMQ) is a signal peptide. A Chitin-binding type R&amp;R domain is found at 45–106 (DGNYRYAYET…PVGDHIPKVP (62 aa)). The span at 149–163 (QDQTTPRSRPSSTPK) shows a compositional bias: polar residues. Residues 149-192 (QDQTTPRSRPSSTPKTIYLTHPPTLSDAPTRRPLRQRQNDSRRR) are disordered.

Component of the cuticle of the pupa of fruit fly. The chain is Pupal cuticle protein (Pcp) from Drosophila pseudoobscura pseudoobscura (Fruit fly).